Reading from the N-terminus, the 78-residue chain is Translation initiation factor IF-1, chloroplastic (78 aa).

An S1-like domain is found at 1-72 (MEKQNLIDME…TKGRITYRLR (72 aa)).

This sequence belongs to the IF-1 family. In terms of assembly, component of the 30S ribosomal translation pre-initiation complex which assembles on the 30S ribosome in the order IF-2 and IF-3, IF-1 and N-formylmethionyl-tRNA(fMet); mRNA recruitment can occur at any time during PIC assembly.

It localises to the plastid. It is found in the chloroplast. In terms of biological role, one of the essential components for the initiation of protein synthesis. Stabilizes the binding of IF-2 and IF-3 on the 30S subunit to which N-formylmethionyl-tRNA(fMet) subsequently binds. Helps modulate mRNA selection, yielding the 30S pre-initiation complex (PIC). Upon addition of the 50S ribosomal subunit IF-1, IF-2 and IF-3 are released leaving the mature 70S translation initiation complex. This Anthoceros angustus (Hornwort) protein is Translation initiation factor IF-1, chloroplastic.